The following is a 67-amino-acid chain: Conotoxin AbVIO (67 aa).

A signal peptide spans 1 to 17 (VIIIAVLFLTACQLIAT). Positions 18–40 (ASYARSERKHPDLRLSSRNSKLS) are excised as a propeptide. Disulfide bonds link Cys43–Cys57, Cys50–Cys61, and Cys56–Cys66.

It belongs to the conotoxin O1 superfamily. In terms of tissue distribution, expressed by the venom duct.

It localises to the secreted. The sequence is that of Conotoxin AbVIO from Conus abbreviatus (Abbreviated cone).